The following is a 48-amino-acid chain: Large ribosomal subunit protein bL32 (48 aa).

The segment covering Met1–Tyr20 has biased composition (basic residues). A disordered region spans residues Met1–Tyr48.

The protein belongs to the bacterial ribosomal protein bL32 family.

In Campylobacter jejuni subsp. doylei (strain ATCC BAA-1458 / RM4099 / 269.97), this protein is Large ribosomal subunit protein bL32.